Reading from the N-terminus, the 149-residue chain is Calmodulin (149 aa).

N-acetylalanine is present on A2. EF-hand domains are found at residues 8–43, 44–79, 81–116, and 117–149; these read EQIA…LGQN, PTEA…KMKD, DSEE…LGEK, and LTDE…MTSK. D21, D23, D25, T27, E32, D57, D59, N61, T63, E68, D94, D96, N98, and E105 together coordinate Ca(2+). K116 carries the post-translational modification N6,N6,N6-trimethyllysine. Ca(2+) is bound by residues D130, D132, D134, Q136, and E141.

This sequence belongs to the calmodulin family.

Functionally, calmodulin mediates the control of a large number of enzymes, ion channels and other proteins by Ca(2+). Among the enzymes to be stimulated by the calmodulin-Ca(2+) complex are a number of protein kinases and phosphatases. This Metridium senile (Brown sea anemone) protein is Calmodulin.